We begin with the raw amino-acid sequence, 146 residues long: Large ribosomal subunit protein bL21 (146 aa).

A disordered region spans residues 96-146 (KKKTRRKMGHRQELTRVMVKSISITNSTPKTSSKTEVKKKSTSPKASNPEN).

It belongs to the bacterial ribosomal protein bL21 family. Part of the 50S ribosomal subunit. Contacts protein L20.

In terms of biological role, this protein binds to 23S rRNA in the presence of protein L20. This Prochlorococcus marinus subsp. pastoris (strain CCMP1986 / NIES-2087 / MED4) protein is Large ribosomal subunit protein bL21.